A 765-amino-acid polypeptide reads, in one-letter code: 5-methyltetrahydropteroyltriglutamate--homocysteine methyltransferase (765 aa).

Residues arginine 18–lysine 21 and lysine 114 contribute to the 5-methyltetrahydropteroyltri-L-glutamate site. L-homocysteine is bound by residues isoleucine 437–serine 439 and glutamate 490. Residues isoleucine 437–serine 439 and glutamate 490 contribute to the L-methionine site. 5-methyltetrahydropteroyltri-L-glutamate is bound at residue tryptophan 567. Aspartate 605 is a binding site for L-homocysteine. Residue aspartate 605 participates in L-methionine binding. Residue glutamate 611 participates in 5-methyltetrahydropteroyltri-L-glutamate binding. Zn(2+)-binding residues include histidine 647, cysteine 649, and glutamate 671. The active-site Proton donor is the histidine 700. Residue cysteine 732 coordinates Zn(2+).

The protein belongs to the vitamin-B12 independent methionine synthase family. Requires Zn(2+) as cofactor.

It carries out the reaction 5-methyltetrahydropteroyltri-L-glutamate + L-homocysteine = tetrahydropteroyltri-L-glutamate + L-methionine. Its pathway is amino-acid biosynthesis; L-methionine biosynthesis via de novo pathway; L-methionine from L-homocysteine (MetE route): step 1/1. Catalyzes the transfer of a methyl group from 5-methyltetrahydrofolate to homocysteine resulting in methionine formation. The chain is 5-methyltetrahydropteroyltriglutamate--homocysteine methyltransferase from Listeria innocua serovar 6a (strain ATCC BAA-680 / CLIP 11262).